We begin with the raw amino-acid sequence, 493 residues long: Sulfoacetaldehyde dehydrogenase (acylating) (493 aa).

Positions 1–10 (MSVQILHRRQ) are enriched in basic residues. Residues 1–21 (MSVQILHRRQSNNSDLPLPTA) form a disordered region. The active-site Nucleophile is the Cys273.

The protein belongs to the aldehyde dehydrogenase family. As to quaternary structure, homodimer.

It localises to the cytoplasm. It catalyses the reaction sulfoacetaldehyde + NADP(+) + CoA = sulfoacetyl-CoA + NADPH + H(+). In terms of biological role, involved in the degradation of sulfoacetate, a widespread natural product. Catalyzes the conversion of sulfoacetyl-CoA and NADPH to sulfoacetaldehyde, CoA and NADP(+). Specific for NADP(+) and sulfoacetaldehyde. This Cupriavidus necator (strain ATCC 17699 / DSM 428 / KCTC 22496 / NCIMB 10442 / H16 / Stanier 337) (Ralstonia eutropha) protein is Sulfoacetaldehyde dehydrogenase (acylating).